We begin with the raw amino-acid sequence, 61 residues long: Small ribosomal subunit protein uS14 (61 aa).

Cys24, Cys27, Cys40, and Cys43 together coordinate Zn(2+).

This sequence belongs to the universal ribosomal protein uS14 family. Zinc-binding uS14 subfamily. As to quaternary structure, part of the 30S ribosomal subunit. Contacts proteins S3 and S10. The cofactor is Zn(2+).

In terms of biological role, binds 16S rRNA, required for the assembly of 30S particles and may also be responsible for determining the conformation of the 16S rRNA at the A site. In Treponema denticola (strain ATCC 35405 / DSM 14222 / CIP 103919 / JCM 8153 / KCTC 15104), this protein is Small ribosomal subunit protein uS14.